The sequence spans 262 residues: ATP synthase subunit a (262 aa).

The next 5 helical transmembrane spans lie at 26-46, 86-106, 130-150, 204-226, and 240-260; these read VHIDTLFFSILAAVIFLFVFS, VAPLALTIFCWVFIMNAIDLI, DISATLGMSICVFFLILFYTI, LIFILIAVMYSANMAIAALGIPL, and LQAFIFMMLTVVYLSIAYNKA.

The protein belongs to the ATPase A chain family. As to quaternary structure, F-type ATPases have 2 components, CF(1) - the catalytic core - and CF(0) - the membrane proton channel. CF(1) has five subunits: alpha(3), beta(3), gamma(1), delta(1), epsilon(1). CF(0) has three main subunits: a(1), b(2) and c(9-12). The alpha and beta chains form an alternating ring which encloses part of the gamma chain. CF(1) is attached to CF(0) by a central stalk formed by the gamma and epsilon chains, while a peripheral stalk is formed by the delta and b chains.

Its subcellular location is the cell inner membrane. Functionally, key component of the proton channel; it plays a direct role in the translocation of protons across the membrane. The polypeptide is ATP synthase subunit a (Haemophilus influenzae (strain PittEE)).